Consider the following 109-residue polypeptide: Hainantoxin-XVIII-3 (109 aa).

The first 18 residues, M1–A18, serve as a signal peptide directing secretion. Residues F19–A46 constitute a propeptide that is removed on maturation. Intrachain disulfides connect C47/C62, C55/C68, C59/C108, and C61/C81.

Belongs to the neurotoxin 25 family. F7 subfamily. As to expression, expressed by the venom gland.

The protein localises to the secreted. In terms of biological role, putative ion channel inhibitor. This Cyriopagopus hainanus (Chinese bird spider) protein is Hainantoxin-XVIII-3.